The following is a 259-amino-acid chain: Dickkopf-related protein 2 (259 aa).

The N-terminal stretch at 1-33 (MAALMRVKDSSRCLLLLAAVLMVESSQLGSSRA) is a signal peptide. Residues 42 to 70 (LGGETPAQSANRSAGMNQGLAFGGSKKGK) form a disordered region. The segment covering 47-57 (PAQSANRSAGM) has biased composition (polar residues). An N-linked (GlcNAc...) asparagine glycan is attached at Asn-52. Positions 78–127 (CSSDKECEVGRYCHSPHQGSSACMLCRRKKKRCHRDGMCCPGTRCNNGIC) are DKK-type Cys-1. 5 disulfides stabilise this stretch: Cys-183/Cys-195, Cys-189/Cys-204, Cys-194/Cys-231, Cys-214/Cys-239, and Cys-233/Cys-256. Residues 183 to 256 (CLRSSDCIDG…YSSKARLHVC (74 aa)) are DKK-type Cys-2.

It belongs to the dickkopf family. Interacts with LRP5 and LRP6. May be proteolytically processed by a furin-like protease.

The protein localises to the secreted. Its function is as follows. Antagonizes canonical Wnt signaling by inhibiting LRP5/6 interaction with Wnt and by forming a ternary complex with the transmembrane protein KREMEN that promotes internalization of LRP5/6. DKKs play an important role in vertebrate development, where they locally inhibit Wnt regulated processes such as antero-posterior axial patterning, limb development, somitogenesis and eye formation. In the adult, Dkks are implicated in bone formation and bone disease, cancer and Alzheimer disease. The polypeptide is Dickkopf-related protein 2 (Mus musculus (Mouse)).